The sequence spans 150 residues: Urease accessory protein UreE (150 aa).

The protein belongs to the UreE family.

The protein localises to the cytoplasm. Its function is as follows. Involved in urease metallocenter assembly. Binds nickel. Probably functions as a nickel donor during metallocenter assembly. This is Urease accessory protein UreE from Parasynechococcus marenigrum (strain WH8102).